The chain runs to 526 residues: Putative ankyrin repeat protein R840 (526 aa).

15 ANK repeats span residues 78–107 (TLNE…NIRS), 108–137 (RDNF…DIRS), 139–167 (KNYA…NIRD), 169–197 (DNCA…DSTS), 198–227 (NFNE…RCRN), 229–255 (SAII…NIRI), 256–285 (DDDY…NIRS), 286–315 (EIDH…DIKS), 317–345 (YDRS…NIRN), 346–375 (INDY…NIRV), 376–405 (DNDS…DIRV), 406–435 (NNYQ…NVSI), 437–467 (NVPL…DINL), 468–497 (ADDM…NVRA), and 499–526 (NDYA…AILS).

In Acanthamoeba polyphaga (Amoeba), this protein is Putative ankyrin repeat protein R840.